We begin with the raw amino-acid sequence, 500 residues long: NAD(P)H-quinone oxidoreductase chain 4, chloroplastic (500 aa).

Transmembrane regions (helical) follow at residues 4-24, 35-55, 87-107, 113-130, 134-154, 167-187, 211-231, 242-262, 272-292, 305-325, 330-350, 386-406, 416-436, and 462-482; these read FPWL…MLFL, YTIC…CYNF, IGTI…AFPV, FFHF…GSFS, LLLF…LLSM, FILY…GISL, ILFY…IPLH, HYST…YGLV, AHSM…IYAA, IAYS…SITD, GAIL…FLAG, LALP…GIIT, ILII…LLSM, and LFLS…PDFV.

It belongs to the complex I subunit 4 family.

The protein localises to the plastid. The protein resides in the chloroplast thylakoid membrane. The catalysed reaction is a plastoquinone + NADH + (n+1) H(+)(in) = a plastoquinol + NAD(+) + n H(+)(out). It catalyses the reaction a plastoquinone + NADPH + (n+1) H(+)(in) = a plastoquinol + NADP(+) + n H(+)(out). The polypeptide is NAD(P)H-quinone oxidoreductase chain 4, chloroplastic (Arabis hirsuta (Hairy rock-cress)).